Here is a 586-residue protein sequence, read N- to C-terminus: Arginine--tRNA ligase (586 aa).

The 'HIGH' region signature appears at 133–143; it reads ANPTGPLNIVS.

Belongs to the class-I aminoacyl-tRNA synthetase family. As to quaternary structure, monomer.

It is found in the cytoplasm. It carries out the reaction tRNA(Arg) + L-arginine + ATP = L-arginyl-tRNA(Arg) + AMP + diphosphate. This Leptospira interrogans serogroup Icterohaemorrhagiae serovar Lai (strain 56601) protein is Arginine--tRNA ligase.